Consider the following 393-residue polypeptide: Mitogen-activated protein kinase homolog NTF4 (393 aa).

The disordered stretch occupies residues 1 to 32; it reads MDGPAHQTDTVMSDAAGQQPAPPSQPVAGIDN. Residues 60–345 enclose the Protein kinase domain; that stretch reads KPPIMPIGKG…VEDALAHPYL (286 aa). Residues 66–74 and lysine 89 each bind ATP; that span reads IGKGAYGIV. The active-site Proton acceptor is aspartate 186. A Phosphothreonine modification is found at threonine 218. A TXY motif is present at residues 218–220; it reads TEY. The residue at position 220 (tyrosine 220) is a Phosphotyrosine.

The protein belongs to the protein kinase superfamily. CMGC Ser/Thr protein kinase family. MAP kinase subfamily. Mg(2+) is required as a cofactor. Post-translationally, dually phosphorylated on Thr-218 and Tyr-220, which activates the enzyme. Very low autophosphorylation, although dramatically increased when Mn(2+) is added to the reaction instead of Mg(2+).

The catalysed reaction is L-seryl-[protein] + ATP = O-phospho-L-seryl-[protein] + ADP + H(+). The enzyme catalyses L-threonyl-[protein] + ATP = O-phospho-L-threonyl-[protein] + ADP + H(+). Its activity is regulated as follows. Activated by tyrosine and threonine phosphorylation. In Nicotiana tabacum (Common tobacco), this protein is Mitogen-activated protein kinase homolog NTF4 (NTF4).